Here is a 205-residue protein sequence, read N- to C-terminus: Probable nicotinate-nucleotide adenylyltransferase (205 aa).

This sequence belongs to the NadD family.

The enzyme catalyses nicotinate beta-D-ribonucleotide + ATP + H(+) = deamido-NAD(+) + diphosphate. It participates in cofactor biosynthesis; NAD(+) biosynthesis; deamido-NAD(+) from nicotinate D-ribonucleotide: step 1/1. In terms of biological role, catalyzes the reversible adenylation of nicotinate mononucleotide (NaMN) to nicotinic acid adenine dinucleotide (NaAD). This Arthrobacter sp. (strain FB24) protein is Probable nicotinate-nucleotide adenylyltransferase.